The primary structure comprises 499 residues: Probable mitochondrial-processing peptidase subunit alpha-2, chloroplastic/mitochondrial (499 aa).

This sequence belongs to the peptidase M16 family. In terms of assembly, heterodimer of alpha and beta subunits, forming the mitochondrial processing protease (MPP) in which subunit alpha is involved in substrate recognition and binding and subunit beta is the catalytic subunit. Component of the ubiquinol-cytochrome c oxidoreductase (cytochrome b-c1 complex, complex III, CIII), a multisubunit enzyme composed of 10 subunits. The complex is composed of 3 respiratory subunits cytochrome b (MT-CYB), cytochrome c1 (CYC1-1 or CYC1-2) and Rieske protein (UCR1-1 or UCR1-2), 2 core protein subunits MPPalpha1 (or MPPalpha2) and MPPB, and 5 low-molecular weight protein subunits QCR7-1 (or QCR7-2), UCRQ-1 (or UCRQ-2), QCR9, UCRY and probably QCR6-1 (or QCR6-2). The complex exists as an obligatory dimer and forms supercomplexes (SCs) in the inner mitochondrial membrane with NADH-ubiquinone oxidoreductase (complex I, CI), resulting in different assemblies (supercomplexes SCI(1)III(2) and SCI(2)III(4)). Interacts with TIM23-2.

The protein resides in the plastid. It localises to the chloroplast stroma. The protein localises to the mitochondrion matrix. Its subcellular location is the mitochondrion inner membrane. Its function is as follows. Substrate recognition and binding subunit of the essential mitochondrial processing protease (MPP), which cleaves the mitochondrial sequence off newly imported precursors proteins. Component of the ubiquinol-cytochrome c oxidoreductase, a multisubunit transmembrane complex that is part of the mitochondrial electron transport chain which drives oxidative phosphorylation. The respiratory chain contains 3 multisubunit complexes succinate dehydrogenase (complex II, CII), ubiquinol-cytochrome c oxidoreductase (cytochrome b-c1 complex, complex III, CIII) and cytochrome c oxidase (complex IV, CIV), that cooperate to transfer electrons derived from NADH and succinate to molecular oxygen, creating an electrochemical gradient over the inner membrane that drives transmembrane transport and the ATP synthase. The cytochrome b-c1 complex catalyzes electron transfer from ubiquinol to cytochrome c, linking this redox reaction to translocation of protons across the mitochondrial inner membrane, with protons being carried across the membrane as hydrogens on the quinol. In the process called Q cycle, 2 protons are consumed from the matrix, 4 protons are released into the intermembrane space and 2 electrons are passed to cytochrome c. The sequence is that of Probable mitochondrial-processing peptidase subunit alpha-2, chloroplastic/mitochondrial (MPPalpha2) from Arabidopsis thaliana (Mouse-ear cress).